The sequence spans 85 residues: Three-finger toxin MALT0044C (85 aa).

An N-terminal signal peptide occupies residues 1-21; the sequence is MKTLLLTLVVVTIVCLDLGNT. 4 disulfide bridges follow: cysteine 24/cysteine 45, cysteine 38/cysteine 63, cysteine 67/cysteine 78, and cysteine 79/cysteine 84.

It belongs to the three-finger toxin family. Short-chain subfamily. Expressed by the venom gland.

The protein localises to the secreted. The sequence is that of Three-finger toxin MALT0044C from Micrurus altirostris (Uruguayan coral snake).